The chain runs to 316 residues: Aspartate carbamoyltransferase catalytic subunit (316 aa).

The carbamoyl phosphate site is built by R66 and T67. An L-aspartate-binding site is contributed by K94. Residues R116, H146, and Q149 each contribute to the carbamoyl phosphate site. R180 and R235 together coordinate L-aspartate. Carbamoyl phosphate-binding residues include G276 and P277.

Belongs to the aspartate/ornithine carbamoyltransferase superfamily. ATCase family. As to quaternary structure, heterododecamer (2C3:3R2) of six catalytic PyrB chains organized as two trimers (C3), and six regulatory PyrI chains organized as three dimers (R2).

It catalyses the reaction carbamoyl phosphate + L-aspartate = N-carbamoyl-L-aspartate + phosphate + H(+). Its pathway is pyrimidine metabolism; UMP biosynthesis via de novo pathway; (S)-dihydroorotate from bicarbonate: step 2/3. In terms of biological role, catalyzes the condensation of carbamoyl phosphate and aspartate to form carbamoyl aspartate and inorganic phosphate, the committed step in the de novo pyrimidine nucleotide biosynthesis pathway. This is Aspartate carbamoyltransferase catalytic subunit from Stenotrophomonas maltophilia (strain R551-3).